The following is a 248-amino-acid chain: 3-oxoacyl-[acyl-carrier-protein] reductase FabG (248 aa).

NADP(+) contacts are provided by residues Gly14 to Arg17, Asp65 to Val66, and Asn92. Substrate is bound at residue Ser144. Catalysis depends on Tyr157, which acts as the Proton acceptor. NADP(+) is bound by residues Tyr157 to Lys161 and Ile190.

It belongs to the short-chain dehydrogenases/reductases (SDR) family. In terms of assembly, homotetramer.

The enzyme catalyses a (3R)-hydroxyacyl-[ACP] + NADP(+) = a 3-oxoacyl-[ACP] + NADPH + H(+). The protein operates within lipid metabolism; fatty acid biosynthesis. Its function is as follows. Catalyzes the NADPH-dependent reduction of beta-ketoacyl-ACP substrates to beta-hydroxyacyl-ACP products, the first reductive step in the elongation cycle of fatty acid biosynthesis. This is 3-oxoacyl-[acyl-carrier-protein] reductase FabG (fabG) from Chlamydia muridarum (strain MoPn / Nigg).